Consider the following 140-residue polypeptide: Thymic stromal lymphopoietin (140 aa).

The first 19 residues, 1–19 (MVLLRSLFILQVLVRMGLT), serve as a signal peptide directing secretion. N-linked (GlcNAc...) asparagine glycans are attached at residues Asn-21 and Asn-26. Intrachain disulfides connect Cys-25/Cys-98, Cys-57/Cys-63, and Cys-78/Cys-121. N-linked (GlcNAc...) asparagine glycosylation is present at Asn-123.

In terms of assembly, interacts with a receptor composed of CRLF2 and IL7R. Binding of TSLP to CRLF2/TSLPR is a mechanistic prerequisite for recruitment of IL7R to the high-affinity ternary complex.

The protein resides in the secreted. Its function is as follows. Cytokine that induces the release of T-cell-attracting chemokines from monocytes and, in particular, enhances the maturation of CD11c(+) dendritic cells. Can induce allergic inflammation by directly activating mast cells. This Mus musculus (Mouse) protein is Thymic stromal lymphopoietin (Tslp).